The chain runs to 255 residues: NAD kinase (255 aa).

Residue Asp44 is the Proton acceptor of the active site. NAD(+) contacts are provided by residues 44–45 (DG), His49, 114–115 (NE), Asp144, Ala152, 155–160 (SAYNLS), and Gln216.

Belongs to the NAD kinase family. A divalent metal cation is required as a cofactor.

It localises to the cytoplasm. The catalysed reaction is NAD(+) + ATP = ADP + NADP(+) + H(+). In terms of biological role, involved in the regulation of the intracellular balance of NAD and NADP, and is a key enzyme in the biosynthesis of NADP. Catalyzes specifically the phosphorylation on 2'-hydroxyl of the adenosine moiety of NAD to yield NADP. This Rickettsia typhi (strain ATCC VR-144 / Wilmington) protein is NAD kinase.